A 307-amino-acid chain; its full sequence is Glycine--tRNA ligase alpha subunit (307 aa).

The protein belongs to the class-II aminoacyl-tRNA synthetase family. In terms of assembly, tetramer of two alpha and two beta subunits.

The protein localises to the cytoplasm. The enzyme catalyses tRNA(Gly) + glycine + ATP = glycyl-tRNA(Gly) + AMP + diphosphate. The sequence is that of Glycine--tRNA ligase alpha subunit from Aeromonas hydrophila subsp. hydrophila (strain ATCC 7966 / DSM 30187 / BCRC 13018 / CCUG 14551 / JCM 1027 / KCTC 2358 / NCIMB 9240 / NCTC 8049).